The following is an 82-amino-acid chain: Mu-conotoxin MrVIA (82 aa).

Positions Met-1 to Ala-22 are cleaved as a signal peptide. The propeptide occupies Asp-23–Glu-49. Intrachain disulfides connect Cys-53–Cys-71, Cys-60–Cys-76, and Cys-70–Cys-81.

Expressed by the venom duct.

It localises to the secreted. In terms of biological role, muO-conotoxins are gating-modifier toxins that inhibit sodium current by trapping the domain II voltage sensor in the closed position to prevent opening of the sodium channel. This toxin inhibits rNav1.2/SCN2A (IC(50)=532 nM), rNav1.4/SCN4A (IC(50)=438 nM) and rNav1.7/SCN9A (IC(50)=345 nM). It blocks Nav channels by interacting mainly with the C-terminal part of the pore loop of domain-3. It does not bind on site 1. At small concentration, this toxin also acts as a calcium current agonist, whereas at higher doses it blocks fast-inactivating calcium current. This Conus marmoreus (Marble cone) protein is Mu-conotoxin MrVIA.